A 502-amino-acid chain; its full sequence is Probable cytosol aminopeptidase (502 aa).

Mn(2+)-binding residues include Lys269 and Asp274. Lys281 is a catalytic residue. Mn(2+) is bound by residues Asp292, Asp351, and Glu353. Arg355 is an active-site residue.

The protein belongs to the peptidase M17 family. Mn(2+) serves as cofactor.

It is found in the cytoplasm. It catalyses the reaction Release of an N-terminal amino acid, Xaa-|-Yaa-, in which Xaa is preferably Leu, but may be other amino acids including Pro although not Arg or Lys, and Yaa may be Pro. Amino acid amides and methyl esters are also readily hydrolyzed, but rates on arylamides are exceedingly low.. The enzyme catalyses Release of an N-terminal amino acid, preferentially leucine, but not glutamic or aspartic acids.. Presumably involved in the processing and regular turnover of intracellular proteins. Catalyzes the removal of unsubstituted N-terminal amino acids from various peptides. In Aliivibrio fischeri (strain MJ11) (Vibrio fischeri), this protein is Probable cytosol aminopeptidase.